Here is a 1031-residue protein sequence, read N- to C-terminus: Caprin-2 (1031 aa).

Disordered regions lie at residues 1 to 27 (MKSA…QSTL), 364 to 458 (LQEE…SWEN), 500 to 520 (PKDV…LPKD), 605 to 658 (DQAS…SSEA), and 830 to 876 (RSGT…SMTP). Composition is skewed to polar residues over residues 425 to 439 (VSVQ…SWTT) and 446 to 458 (ASVQ…SWEN). A compositionally biased stretch (low complexity) spans 608-646 (SSGSETEFTTSETPEMVVSPCKPKPASALASPNPPLSKS). A compositionally biased stretch (polar residues) spans 830–853 (RSGTSSGLQANSRAGWSDSSQVSS). A phosphoserine mark is found at serine 852 and serine 853. A C1q domain is found at 897–1031 (PQQMRVAFSA…TFSGYLLYQD (135 aa)). Residues aspartate 982 and glutamate 988 each coordinate Ca(2+).

Belongs to the caprin family. In terms of assembly, homotrimer; via C1q domain. Found in a complex with LRP6, CCNY and CDK14 during G2/M stage; CAPRIN2 functions as a scaffold for the complex by binding to CCNY via its N terminus and to CDK14 via its C terminus. Interacts with LRP5. Interacts with LRP6. As to expression, specifically expressed in brain (at protein level).

It is found in the cytoplasm. The protein resides in the cell membrane. Functionally, promotes phosphorylation of the Wnt coreceptor LRP6, leading to increased activity of the canonical Wnt signaling pathway. Facilitates constitutive LRP6 phosphorylation by CDK14/CCNY during G2/M stage of the cell cycle, which may potentiate cells for Wnt signaling. May regulate the transport and translation of mRNAs, modulating for instance the expression of proteins involved in synaptic plasticity in neurons. Involved in regulation of growth as erythroblasts shift from a highly proliferative state towards their terminal phase of differentiation. May be involved in apoptosis. The polypeptide is Caprin-2 (Mus musculus (Mouse)).